Here is a 70-residue protein sequence, read N- to C-terminus: Large ribosomal subunit protein bL31 (70 aa).

4 residues coordinate Zn(2+): Cys-16, Cys-18, Cys-37, and Cys-40.

Belongs to the bacterial ribosomal protein bL31 family. Type A subfamily. As to quaternary structure, part of the 50S ribosomal subunit. Zn(2+) serves as cofactor.

Functionally, binds the 23S rRNA. The sequence is that of Large ribosomal subunit protein bL31 from Shewanella woodyi (strain ATCC 51908 / MS32).